A 66-amino-acid chain; its full sequence is UPF0337 protein BT9727_0908 (66 aa).

Positions 1–22 are disordered; sequence MSENGLKEQITGKVEKTKGQVK. Residues 13-22 are compositionally biased toward basic and acidic residues; sequence KVEKTKGQVK.

The protein belongs to the UPF0337 (CsbD) family.

The chain is UPF0337 protein BT9727_0908 from Bacillus thuringiensis subsp. konkukian (strain 97-27).